We begin with the raw amino-acid sequence, 448 residues long: Ribosomal protein uS12 methylthiotransferase RimO (448 aa).

The region spanning 7–123 is the MTTase N-terminal domain; the sequence is EKVSLVSLGC…IAEIIAEKEG (117 aa). [4Fe-4S] cluster-binding residues include Cys-16, Cys-52, Cys-86, Cys-161, Cys-165, and Cys-168. Residues 147–377 enclose the Radical SAM core domain; that stretch reads SSPYYTAYLK…MRTQARVSFK (231 aa). A TRAM domain is found at 380 to 448; it reads RSLVDTEELV…DYDLIGEIVP (69 aa).

The protein belongs to the methylthiotransferase family. RimO subfamily. [4Fe-4S] cluster serves as cofactor.

The protein resides in the cytoplasm. The enzyme catalyses L-aspartate(89)-[ribosomal protein uS12]-hydrogen + (sulfur carrier)-SH + AH2 + 2 S-adenosyl-L-methionine = 3-methylsulfanyl-L-aspartate(89)-[ribosomal protein uS12]-hydrogen + (sulfur carrier)-H + 5'-deoxyadenosine + L-methionine + A + S-adenosyl-L-homocysteine + 2 H(+). Catalyzes the methylthiolation of an aspartic acid residue of ribosomal protein uS12. This chain is Ribosomal protein uS12 methylthiotransferase RimO, found in Geotalea uraniireducens (strain Rf4) (Geobacter uraniireducens).